Here is a 273-residue protein sequence, read N- to C-terminus: 3-methyl-2-oxobutanoate hydroxymethyltransferase (273 aa).

The Mg(2+) site is built by D53 and D92. 3-methyl-2-oxobutanoate is bound by residues 53-54, D92, and K122; that span reads DS. E124 lines the Mg(2+) pocket. The active-site Proton acceptor is E191.

The protein belongs to the PanB family. Homodecamer; pentamer of dimers. Mg(2+) is required as a cofactor.

Its subcellular location is the cytoplasm. It catalyses the reaction 3-methyl-2-oxobutanoate + (6R)-5,10-methylene-5,6,7,8-tetrahydrofolate + H2O = 2-dehydropantoate + (6S)-5,6,7,8-tetrahydrofolate. It functions in the pathway cofactor biosynthesis; (R)-pantothenate biosynthesis; (R)-pantoate from 3-methyl-2-oxobutanoate: step 1/2. In terms of biological role, catalyzes the reversible reaction in which hydroxymethyl group from 5,10-methylenetetrahydrofolate is transferred onto alpha-ketoisovalerate to form ketopantoate. The chain is 3-methyl-2-oxobutanoate hydroxymethyltransferase from Phocaeicola vulgatus (strain ATCC 8482 / DSM 1447 / JCM 5826 / CCUG 4940 / NBRC 14291 / NCTC 11154) (Bacteroides vulgatus).